We begin with the raw amino-acid sequence, 418 residues long: Putative ion-transport protein YfeO (418 aa).

12 consecutive transmembrane segments (helical) span residues 10 to 30, 54 to 74, 99 to 119, 120 to 140, 149 to 169, 186 to 206, 223 to 243, 258 to 278, 300 to 320, 322 to 342, 343 to 363, and 371 to 391; these read LLLSLPAVAIGIASSLILIVV, DSPIWIIGVLTLTGIAVGLVI, ALPGLIVALILGLAGGVSLGP, EHPIMTVNIALAVAIGARLLP, ILASAGTIGALFGTPVAAALI, LFAPLMAAAAGALTTGLFFHP, ILSGAIVAAIAIAAGMVAVWC, VLVLGIGGFILGILGVIGGPV, DYFLLAVIKLAALVVAAASGF, GGRIFPAVFVGVALGLMLHEH, VPAVPAAITVSCAILGIVLVV, and LFMAAVVVPNTTLLPLLCIVM.

It belongs to the chloride channel (TC 2.A.49) family.

Its subcellular location is the cell membrane. The chain is Putative ion-transport protein YfeO from Shigella sonnei (strain Ss046).